We begin with the raw amino-acid sequence, 951 residues long: Exportin-2 (951 aa).

Residues 29–104 form the Importin N-terminal domain; sequence ATSKIQKFVK…KSLLLNFILS (76 aa).

This sequence belongs to the XPO2/CSE1 family.

The protein resides in the cytoplasm. The protein localises to the nucleus. In terms of biological role, export receptor for importin alpha. Mediates importin-alpha re-export from the nucleus to the cytoplasm after import substrates have been released into the nucleoplasm. The protein is Exportin-2 (xpo2) of Dictyostelium discoideum (Social amoeba).